The following is a 1396-amino-acid chain: DNA-directed RNA polymerase subunit beta' (1396 aa).

C70, C72, C85, and C88 together coordinate Zn(2+). Mg(2+) contacts are provided by D460, D462, and D464. Zn(2+) contacts are provided by C814, C889, C896, and C899.

It belongs to the RNA polymerase beta' chain family. In terms of assembly, the RNAP catalytic core consists of 2 alpha, 1 beta, 1 beta' and 1 omega subunit. When a sigma factor is associated with the core the holoenzyme is formed, which can initiate transcription. Requires Mg(2+) as cofactor. It depends on Zn(2+) as a cofactor.

It carries out the reaction RNA(n) + a ribonucleoside 5'-triphosphate = RNA(n+1) + diphosphate. In terms of biological role, DNA-dependent RNA polymerase catalyzes the transcription of DNA into RNA using the four ribonucleoside triphosphates as substrates. In Hahella chejuensis (strain KCTC 2396), this protein is DNA-directed RNA polymerase subunit beta'.